The chain runs to 634 residues: Probable potassium transport system protein Kup (634 aa).

12 consecutive transmembrane segments (helical) span residues 19–39 (AIGL…TSPL), 62–82 (VLSL…VIFV), 113–133 (FVVV…MITP), 150–170 (GLEH…FLIQ), 177–197 (IGIL…ALGV), 225–245 (IGVA…ALYA), 259–279 (WFLL…ATIL), 291–311 (LLAP…ATVI), 349–369 (IYIG…VLGF), 379–399 (YGVA…VVIW), 406–426 (LWLG…FFAA), and 431–451 (VIQG…LMST).

This sequence belongs to the HAK/KUP transporter (TC 2.A.72) family.

It localises to the cell inner membrane. It catalyses the reaction K(+)(in) + H(+)(in) = K(+)(out) + H(+)(out). Functionally, transport of potassium into the cell. Likely operates as a K(+):H(+) symporter. The sequence is that of Probable potassium transport system protein Kup from Pseudomonas aeruginosa (strain UCBPP-PA14).